Consider the following 456-residue polypeptide: G-protein coupled receptor 39 (456 aa).

The Extracellular portion of the chain corresponds to 1–34 (MASSSGSNHICSRVIDHSHVPEFEVATWIKITLI). Disulfide bonds link cysteine 11–cysteine 191 and cysteine 108–cysteine 210. Residues histidine 17 and histidine 19 each coordinate Zn(2+). The chain crosses the membrane as a helical span at residues 35 to 55 (LVYLIIFVVGILGNSVTIRVT). Residues 56–69 (QVLQKKGYLQKEVT) are Cytoplasmic-facing. A helical transmembrane segment spans residues 70–89 (DHMVSLACSDILVFLIGMPM). Over 90–109 (EFYSIIWNPLTTPSYALSCK) the chain is Extracellular. The chain crosses the membrane as a helical span at residues 110-131 (LHTFLFETCSYATLLHVLTLSF). The Cytoplasmic segment spans residues 132–151 (ERYIAICHPFKYKAVSGPRQ). A helical transmembrane segment spans residues 152-172 (VKLLIGFVWVTSALVALPLLF). The Extracellular portion of the chain corresponds to 173–217 (AMGIEYPLVNVPTHKGLNCNLSRTRHHDEPGNSNMSICTNLSNRW). Asparagine 192 and asparagine 206 each carry an N-linked (GlcNAc...) asparagine glycan. The chain crosses the membrane as a helical span at residues 218-242 (EVFQSSIFGAFAVYLVVLASVAFMC). Topologically, residues 243–283 (WNMMKVLMKSKQGTLAGTGPQLQLRKSESEESRTARRQTII) are cytoplasmic. A helical transmembrane segment spans residues 284 to 305 (FLRLIVVTLAVCWMPNQIRRIM). Over 306–323 (AAAKPKHDWTRTYFRAYM) the chain is Extracellular. Residues 324-344 (ILLPFSDTFFYLSSVVNPLLY) form a helical membrane-spanning segment. The Cytoplasmic segment spans residues 345–456 (NVSSQQFRKV…TENSLQEQEV (112 aa)). Serine 397 bears the Phosphoserine mark. Residues 415–456 (FQTEAKPGEAKPQPLSPESPQTGSETKPAGSTTENSLQEQEV) form a disordered region. The segment covering 430 to 456 (SPESPQTGSETKPAGSTTENSLQEQEV) has biased composition (polar residues).

It belongs to the G-protein coupled receptor 1 family. As to quaternary structure, interacts with HTR1A. Interacts with GALR1. As to expression, expression is detected in septumamygdala, parietal cells, enterocytes, neurons and pancreas, in peripheral organs such as the duodenum and kidney but not in the pituitary and hypothalamus.

The protein resides in the cell membrane. In terms of biological role, zinc-sensing receptor that can sense changes in extracellular Zn(2+), mediate Zn(2+) signal transmission, and participates in the regulation of numerous physiological processes including glucose homeostasis regulation, gastrointestinal mobility, hormone secretion and cell death. Activation by Zn(2+) in keratinocytes increases the intracellular concentration of Ca(2+) and activates the ERK/MAPK and PI3K/AKT signaling pathways leading to epithelial repair. Plays an essential role in normal wound healing by inducing the production of cytokines including the major inflammatory cytokine IL6 via the PKC/MAPK/CEBPB pathway. Regulates adipose tissue metabolism, especially lipolysis, and regulates the function of lipases, such as hormone-sensitive lipase and adipose triglyceride lipase. Plays a role in the inhibition of cell death and protects against oxidative, endoplasmic reticulum and mitochondrial stress by inducing secretion of the cytoprotective pigment epithelium-derived growth factor (PEDF) and probably other protective transcripts in a GNA13/RHOA/SRE-dependent manner. Forms dynamic heteroreceptor complexes with HTR1A and GALR1 depending on cell type or specific physiological states, resulting in signaling diversity: HTR1A-GPR39 shows additive increase in signaling along the serum response element (SRE) and NF-kappa-B pathways while GALR1 acts as an antagonist blocking SRE. The sequence is that of G-protein coupled receptor 39 (Gpr39) from Mus musculus (Mouse).